The sequence spans 170 residues: Large ribosomal subunit protein uL11 (170 aa).

The protein belongs to the universal ribosomal protein uL11 family. In terms of assembly, part of the ribosomal stalk of the 50S ribosomal subunit. Interacts with L10 and the large rRNA to form the base of the stalk. L10 forms an elongated spine to which L12 dimers bind in a sequential fashion forming a multimeric L10(L12)X complex.

Its function is as follows. Forms part of the ribosomal stalk which helps the ribosome interact with GTP-bound translation factors. The protein is Large ribosomal subunit protein uL11 of Saccharolobus islandicus (strain Y.N.15.51 / Yellowstone #2) (Sulfolobus islandicus).